Here is a 413-residue protein sequence, read N- to C-terminus: Probable glucan 1,3-beta-glucosidase ARB_04467 (413 aa).

A signal peptide spans 1 to 17; it reads MKFGSLLGLSLVGLSVA. The substrate site is built by E46, E202, and Y262. Catalysis depends on E202, which acts as the Proton donor. An intrachain disulfide couples C282 to C412. E300 (nucleophile) is an active-site residue.

It belongs to the glycosyl hydrolase 5 (cellulase A) family. Monomer.

Its subcellular location is the secreted. The protein localises to the cell wall. It carries out the reaction Successive hydrolysis of beta-D-glucose units from the non-reducing ends of (1-&gt;3)-beta-D-glucans, releasing alpha-glucose.. Its function is as follows. Major glucan 1,3-beta-glucosidase required for cell wall integrity. Beta-glucanases participate in the metabolism of beta-glucan, the main structural component of the cell wall. Can also function biosynthetically as a transglycosylase. Functions to deliver glucan from the cell to the extracellular matrix. Involved in cell-substrate and cell-cell adhesion. The polypeptide is Probable glucan 1,3-beta-glucosidase ARB_04467 (Arthroderma benhamiae (strain ATCC MYA-4681 / CBS 112371) (Trichophyton mentagrophytes)).